The primary structure comprises 349 residues: Phenylalanine--tRNA ligase alpha subunit (349 aa).

Glu-262 lines the Mg(2+) pocket.

Belongs to the class-II aminoacyl-tRNA synthetase family. Phe-tRNA synthetase alpha subunit type 1 subfamily. As to quaternary structure, tetramer of two alpha and two beta subunits. Mg(2+) serves as cofactor.

It localises to the cytoplasm. The enzyme catalyses tRNA(Phe) + L-phenylalanine + ATP = L-phenylalanyl-tRNA(Phe) + AMP + diphosphate + H(+). The chain is Phenylalanine--tRNA ligase alpha subunit from Sorangium cellulosum (strain So ce56) (Polyangium cellulosum (strain So ce56)).